Reading from the N-terminus, the 850-residue chain is Receptor-like protein kinase ANXUR1 (850 aa).

The signal sequence occupies residues M1–G26. Residues Q27–H429 are Extracellular-facing. N-linked (GlcNAc...) asparagine glycans are attached at residues N114, N132, N292, N302, and N330. The helical transmembrane segment at A430–T450 threads the bilayer. Residues A451–R850 are Cytoplasmic-facing. The 274-residue stretch at F517 to A790 folds into the Protein kinase domain. Residues I523–V531 and K545 contribute to the ATP site. Catalysis depends on D641, which acts as the Proton acceptor. Positions T796–R850 are disordered. A compositionally biased stretch (polar residues) spans E839–R850.

This sequence belongs to the protein kinase superfamily. Ser/Thr protein kinase family. In terms of tissue distribution, expressed in pollen, but not in pistils or seedlings.

It localises to the cell membrane. The enzyme catalyses L-seryl-[protein] + ATP = O-phospho-L-seryl-[protein] + ADP + H(+). The catalysed reaction is L-threonyl-[protein] + ATP = O-phospho-L-threonyl-[protein] + ADP + H(+). Receptor-like protein kinase that controls pollen tube behavior by directing rupture at proper timing to release the sperm cell. In Arabidopsis thaliana (Mouse-ear cress), this protein is Receptor-like protein kinase ANXUR1 (ANX1).